A 315-amino-acid chain; its full sequence is Transaldolase (315 aa).

Residue Lys-125 is the Schiff-base intermediate with substrate of the active site.

This sequence belongs to the transaldolase family. Type 1 subfamily. As to quaternary structure, homodimer.

The protein resides in the cytoplasm. The catalysed reaction is D-sedoheptulose 7-phosphate + D-glyceraldehyde 3-phosphate = D-erythrose 4-phosphate + beta-D-fructose 6-phosphate. It participates in carbohydrate degradation; pentose phosphate pathway; D-glyceraldehyde 3-phosphate and beta-D-fructose 6-phosphate from D-ribose 5-phosphate and D-xylulose 5-phosphate (non-oxidative stage): step 2/3. Transaldolase is important for the balance of metabolites in the pentose-phosphate pathway. In Paracidovorax citrulli (strain AAC00-1) (Acidovorax citrulli), this protein is Transaldolase.